Reading from the N-terminus, the 260-residue chain is Indole-3-glycerol phosphate synthase (260 aa).

This sequence belongs to the TrpC family.

It catalyses the reaction 1-(2-carboxyphenylamino)-1-deoxy-D-ribulose 5-phosphate + H(+) = (1S,2R)-1-C-(indol-3-yl)glycerol 3-phosphate + CO2 + H2O. It functions in the pathway amino-acid biosynthesis; L-tryptophan biosynthesis; L-tryptophan from chorismate: step 4/5. The polypeptide is Indole-3-glycerol phosphate synthase (Staphylococcus aureus (strain MSSA476)).